A 160-amino-acid chain; its full sequence is Ribosomal RNA large subunit methyltransferase H (160 aa).

The segment at 44–63 (LPESRASNSATRKREEAVQI) is disordered. S-adenosyl-L-methionine contacts are provided by residues Leu76, Gly108, and 127-132 (LGKMTW).

It belongs to the RNA methyltransferase RlmH family. In terms of assembly, homodimer.

The protein resides in the cytoplasm. It carries out the reaction pseudouridine(1915) in 23S rRNA + S-adenosyl-L-methionine = N(3)-methylpseudouridine(1915) in 23S rRNA + S-adenosyl-L-homocysteine + H(+). In terms of biological role, specifically methylates the pseudouridine at position 1915 (m3Psi1915) in 23S rRNA. In Allorhizobium ampelinum (strain ATCC BAA-846 / DSM 112012 / S4) (Agrobacterium vitis (strain S4)), this protein is Ribosomal RNA large subunit methyltransferase H.